Reading from the N-terminus, the 356-residue chain is Holliday junction branch migration complex subunit RuvB (356 aa).

Positions 4–191 are large ATPase domain (RuvB-L); the sequence is TDKLATEQRI…FGIVARLEFY (188 aa). Residues Leu-30, Arg-31, Gly-72, Lys-75, Thr-76, Thr-77, 138 to 140, Arg-181, Tyr-191, and Arg-228 each bind ATP; that span reads EDY. Thr-76 is a Mg(2+) binding site. The interval 192 to 262 is small ATPAse domain (RuvB-S); sequence DADQLSRIVR…VADAALAMLD (71 aa). Positions 265 to 356 are head domain (RuvB-H); sequence PVGFDLMDRK…RDEWDTPDGK (92 aa). 3 residues coordinate DNA: Arg-301, Arg-320, and Arg-325.

This sequence belongs to the RuvB family. In terms of assembly, homohexamer. Forms an RuvA(8)-RuvB(12)-Holliday junction (HJ) complex. HJ DNA is sandwiched between 2 RuvA tetramers; dsDNA enters through RuvA and exits via RuvB. An RuvB hexamer assembles on each DNA strand where it exits the tetramer. Each RuvB hexamer is contacted by two RuvA subunits (via domain III) on 2 adjacent RuvB subunits; this complex drives branch migration. In the full resolvosome a probable DNA-RuvA(4)-RuvB(12)-RuvC(2) complex forms which resolves the HJ.

It localises to the cytoplasm. The enzyme catalyses ATP + H2O = ADP + phosphate + H(+). Functionally, the RuvA-RuvB-RuvC complex processes Holliday junction (HJ) DNA during genetic recombination and DNA repair, while the RuvA-RuvB complex plays an important role in the rescue of blocked DNA replication forks via replication fork reversal (RFR). RuvA specifically binds to HJ cruciform DNA, conferring on it an open structure. The RuvB hexamer acts as an ATP-dependent pump, pulling dsDNA into and through the RuvAB complex. RuvB forms 2 homohexamers on either side of HJ DNA bound by 1 or 2 RuvA tetramers; 4 subunits per hexamer contact DNA at a time. Coordinated motions by a converter formed by DNA-disengaged RuvB subunits stimulates ATP hydrolysis and nucleotide exchange. Immobilization of the converter enables RuvB to convert the ATP-contained energy into a lever motion, pulling 2 nucleotides of DNA out of the RuvA tetramer per ATP hydrolyzed, thus driving DNA branch migration. The RuvB motors rotate together with the DNA substrate, which together with the progressing nucleotide cycle form the mechanistic basis for DNA recombination by continuous HJ branch migration. Branch migration allows RuvC to scan DNA until it finds its consensus sequence, where it cleaves and resolves cruciform DNA. The chain is Holliday junction branch migration complex subunit RuvB from Burkholderia cenocepacia (strain ATCC BAA-245 / DSM 16553 / LMG 16656 / NCTC 13227 / J2315 / CF5610) (Burkholderia cepacia (strain J2315)).